The following is a 425-amino-acid chain: Trigger factor (425 aa).

A PPIase FKBP-type domain is found at 163 to 248 (GDTAVIDFEG…IHEIKTKELP (86 aa)).

Belongs to the FKBP-type PPIase family. Tig subfamily.

It is found in the cytoplasm. It catalyses the reaction [protein]-peptidylproline (omega=180) = [protein]-peptidylproline (omega=0). Involved in protein export. Acts as a chaperone by maintaining the newly synthesized protein in an open conformation. Functions as a peptidyl-prolyl cis-trans isomerase. The sequence is that of Trigger factor from Bacillus mycoides (strain KBAB4) (Bacillus weihenstephanensis).